The following is a 377-amino-acid chain: Formate dehydrogenase, mitochondrial (377 aa).

Residues 1-29 constitute a mitochondrion transit peptide; the sequence is MAAMWRAAARQLVDRAVGSRAAHTSAGSK. Substrate is bound by residues Ile121 and Asn145. NAD(+)-binding positions include Thr146, Asp220, 255–259, Asn281, Asp307, and 331–334; these read PLTEK and HISG.

The protein belongs to the D-isomer specific 2-hydroxyacid dehydrogenase family. FDH subfamily. Homodimer.

It localises to the mitochondrion. It carries out the reaction formate + NAD(+) = CO2 + NADH. In terms of biological role, catalyzes the NAD(+)-dependent oxidation of formate to carbon dioxide. Involved in the cell stress response. The sequence is that of Formate dehydrogenase, mitochondrial from Hordeum vulgare (Barley).